A 270-amino-acid polypeptide reads, in one-letter code: UPF0354 protein BT9727_4425 (270 aa).

This sequence belongs to the UPF0354 family.

The chain is UPF0354 protein BT9727_4425 from Bacillus thuringiensis subsp. konkukian (strain 97-27).